Reading from the N-terminus, the 148-residue chain is MNSDSVICLASLSNYCQYHILGIINNRIVPILIDTGASWSHISASFLKTHQIKNCEEKSVRRFDGTTKKLNKKTLIEIDLSGIQNVKLELYVDEEPNKILLGTDFLENFYFKIESDCLFLNQNQHPRFKLHEDKIFEIIQDLTIPNGI.

This is an uncharacterized protein from Glycine max (Soybean).